We begin with the raw amino-acid sequence, 96 residues long: Small ribosomal subunit protein bS16 (96 aa).

This sequence belongs to the bacterial ribosomal protein bS16 family.

The protein is Small ribosomal subunit protein bS16 of Vesicomyosocius okutanii subsp. Calyptogena okutanii (strain HA).